Here is a 719-residue protein sequence, read N- to C-terminus: Lanosterol synthase (719 aa).

One copy of the PFTB 1 repeat lies at 118-160 (RIEVIRYLVNHANPEDGGWGIHIEGKSTVFGTALNYVVLRILG). The active-site Proton donor is aspartate 451. PFTB repeat units follow at residues 478–523 (LKDS…MIEH), 555–595 (VKNA…SCVK), and 604–645 (SRRA…VVQT).

It belongs to the terpene cyclase/mutase family.

It carries out the reaction (S)-2,3-epoxysqualene = lanosterol. Its pathway is terpene metabolism; lanosterol biosynthesis; lanosterol from farnesyl diphosphate: step 3/3. In terms of biological role, catalyzes the cyclization of (S)-2,3 oxidosqualene to lanosterol, a reaction that forms the sterol nucleus. This chain is Lanosterol synthase (ERG7), found in Pneumocystis carinii.